We begin with the raw amino-acid sequence, 138 residues long: ATP synthase epsilon chain (138 aa).

This sequence belongs to the ATPase epsilon chain family. As to quaternary structure, F-type ATPases have 2 components, CF(1) - the catalytic core - and CF(0) - the membrane proton channel. CF(1) has five subunits: alpha(3), beta(3), gamma(1), delta(1), epsilon(1). CF(0) has three main subunits: a, b and c.

The protein localises to the cell inner membrane. Its function is as follows. Produces ATP from ADP in the presence of a proton gradient across the membrane. In Geobacter sulfurreducens (strain ATCC 51573 / DSM 12127 / PCA), this protein is ATP synthase epsilon chain.